Here is a 212-residue protein sequence, read N- to C-terminus: Large ribosomal subunit protein uL1 (212 aa).

The protein belongs to the universal ribosomal protein uL1 family. As to quaternary structure, part of the 50S ribosomal subunit.

Functionally, binds directly to 23S rRNA. Probably involved in E site tRNA release. Its function is as follows. Protein L1 is also a translational repressor protein, it controls the translation of its operon by binding to its mRNA. This is Large ribosomal subunit protein uL1 from Natronomonas pharaonis (strain ATCC 35678 / DSM 2160 / CIP 103997 / JCM 8858 / NBRC 14720 / NCIMB 2260 / Gabara) (Halobacterium pharaonis).